Consider the following 412-residue polypeptide: UPF0761 membrane protein LPC_2650 (412 aa).

6 helical membrane passes run 36–56 (ALAF…LAIF), 99–119 (LSIW…FTIE), 137–157 (AFLL…LSLA), 177–197 (ILHY…YVVV), 210–230 (GGLV…YYLI), and 241–261 (AFAT…ITLL).

This sequence belongs to the UPF0761 family.

The protein resides in the cell inner membrane. This chain is UPF0761 membrane protein LPC_2650, found in Legionella pneumophila (strain Corby).